The sequence spans 1406 residues: Inactive tyrosine-protein kinase PRAG1 (1406 aa).

Serine 148 carries the post-translational modification Phosphoserine. Residues glutamate 184–proline 193 are compositionally biased toward basic and acidic residues. Disordered stretches follow at residues glutamate 184–glutamate 205 and threonine 217–serine 248. Phosphotyrosine is present on residues tyrosine 253, tyrosine 365, and tyrosine 413. Disordered stretches follow at residues proline 372–valine 470 and aspartate 484–threonine 854. The span at arginine 526–proline 542 shows a compositional bias: basic and acidic residues. The span at proline 546–glycine 576 shows a compositional bias: low complexity. 2 stretches are compositionally biased toward polar residues: residues asparagine 660–tryptophan 671 and aspartate 678–alanine 695. Serine 696 and serine 745 each carry phosphoserine. Composition is skewed to polar residues over residues serine 737–proline 746 and serine 754–cysteine 770. Position 782 is a phosphoserine (serine 782). A compositionally biased stretch (polar residues) spans serine 798–glycine 808. The residue at position 826 (serine 826) is a Phosphoserine. The required for homodimerization stretch occupies residues serine 933–glycine 976. The Protein kinase domain maps to glutamine 978–leucine 1329. Over residues glycine 1163–alanine 1173 the composition is skewed to pro residues. The tract at residues glycine 1163–glutamate 1206 is disordered. Positions proline 1174–glutamate 1202 are enriched in low complexity. A required for homodimerization region spans residues glycine 1331 to leucine 1406.

The protein belongs to the protein kinase superfamily. In terms of assembly, homodimer. Dimerization leads to the catalytic activation of CSK. Interacts (via C-terminus) with RND2. Interacts with CSK (via SH2 domain) in a Tyr-413 phosphorylation-dependent manner; this interaction potentiates kinase activity of CSK. Interacts with PEAK1. Interacts with NOTCH1 intracellular domain (N1ICD). Forms a complex with N1ICD and MAML1, in a MAML1-dependent manner. In terms of processing, phosphorylated by CSK on Tyr-253, Tyr-365, and Tyr-413; Tyr-413 is a primary site of phosphorylation.

Its subcellular location is the cytoplasm. It localises to the cell junction. It is found in the focal adhesion. The protein localises to the nucleus. Functionally, catalytically inactive protein kinase that acts as a scaffold protein. Functions as an effector of the small GTPase RND2, which stimulates RhoA activity and inhibits NGF-induced neurite outgrowth. Promotes Src family kinase (SFK) signaling by regulating the subcellular localization of CSK, a negative regulator of these kinases, leading to the regulation of cell morphology and motility by a CSK-dependent mechanism. Acts as a critical coactivator of Notch signaling. In Homo sapiens (Human), this protein is Inactive tyrosine-protein kinase PRAG1.